Reading from the N-terminus, the 302-residue chain is UPF0761 membrane protein Tola_0461 (302 aa).

6 helical membrane passes run 51–71 (YVSL…LSWL), 111–131 (TTSI…AAID), 150–170 (ITMY…SLLL), 188–208 (LGGG…ILLL), 222–242 (ALLG…GFGY), and 256–276 (ALAG…VVLL).

Belongs to the UPF0761 family.

The protein resides in the cell inner membrane. The sequence is that of UPF0761 membrane protein Tola_0461 from Tolumonas auensis (strain DSM 9187 / NBRC 110442 / TA 4).